The following is a 481-amino-acid chain: Glutamyl-tRNA(Gln) amidotransferase subunit A (481 aa).

Catalysis depends on charge relay system residues lysine 76 and serine 151. Catalysis depends on serine 175, which acts as the Acyl-ester intermediate.

It belongs to the amidase family. GatA subfamily. Heterotrimer of A, B and C subunits.

It catalyses the reaction L-glutamyl-tRNA(Gln) + L-glutamine + ATP + H2O = L-glutaminyl-tRNA(Gln) + L-glutamate + ADP + phosphate + H(+). Allows the formation of correctly charged Gln-tRNA(Gln) through the transamidation of misacylated Glu-tRNA(Gln) in organisms which lack glutaminyl-tRNA synthetase. The reaction takes place in the presence of glutamine and ATP through an activated gamma-phospho-Glu-tRNA(Gln). This chain is Glutamyl-tRNA(Gln) amidotransferase subunit A, found in Neisseria meningitidis serogroup C (strain 053442).